The primary structure comprises 160 residues: ATP synthase subunit b (160 aa).

Residues 13-33 form a helical membrane-spanning segment; sequence VNLAIVIGVLVWFLRGFLGGI.

Belongs to the ATPase B chain family. As to quaternary structure, F-type ATPases have 2 components, F(1) - the catalytic core - and F(0) - the membrane proton channel. F(1) has five subunits: alpha(3), beta(3), gamma(1), delta(1), epsilon(1). F(0) has four main subunits: a(1), b(1), b'(1) and c(10-14). The alpha and beta chains form an alternating ring which encloses part of the gamma chain. F(1) is attached to F(0) by a central stalk formed by the gamma and epsilon chains, while a peripheral stalk is formed by the delta, b and b' chains.

The protein resides in the cellular thylakoid membrane. Functionally, f(1)F(0) ATP synthase produces ATP from ADP in the presence of a proton or sodium gradient. F-type ATPases consist of two structural domains, F(1) containing the extramembraneous catalytic core and F(0) containing the membrane proton channel, linked together by a central stalk and a peripheral stalk. During catalysis, ATP synthesis in the catalytic domain of F(1) is coupled via a rotary mechanism of the central stalk subunits to proton translocation. Component of the F(0) channel, it forms part of the peripheral stalk, linking F(1) to F(0). The chain is ATP synthase subunit b from Parasynechococcus marenigrum (strain WH8102).